The following is a 194-amino-acid chain: 5'-deoxynucleotidase PBPRA2627 (194 aa).

Residues 18 to 19 and histidine 33 contribute to the substrate site; that span reads RW. One can recognise an HD domain in the interval 30-142; it reads ISEHSLQVAF…VKQADSLCAY (113 aa). 3 residues coordinate a divalent metal cation: histidine 33, histidine 68, and aspartate 69. Substrate contacts are provided by residues aspartate 69, 77-80, and aspartate 137; that span reads DMPT. Aspartate 137 is a binding site for a divalent metal cation.

The protein belongs to the 5DNU family. In terms of assembly, homodimer. The cofactor is a divalent metal cation.

The protein resides in the cytoplasm. It catalyses the reaction a 2'-deoxyribonucleoside 5'-phosphate + H2O = a 2'-deoxyribonucleoside + phosphate. Functionally, catalyzes the strictly specific dephosphorylation of 2'-deoxyribonucleoside 5'-monophosphates. This Photobacterium profundum (strain SS9) protein is 5'-deoxynucleotidase PBPRA2627.